The following is a 446-amino-acid chain: Tripartite motif-containing protein 43C (446 aa).

The RING-type zinc finger occupies 16–57 (CSICQGIFMDPVYLRCGHKFCETCLLLFQEDIKFPAYCPTCR). The B box-type zinc-finger motif lies at 88-129 (SEEHKCVTHKAKKMIFCDKSKILLCHLCSDSQEHSGHTHCSI). Zn(2+) is bound by residues Cys93, His96, Cys115, and His121. The B30.2/SPRY domain maps to 271–446 (RLRAHSIPGL…VRPFFFAAYT (176 aa)).

It belongs to the TRIM/RBCC family.

The chain is Tripartite motif-containing protein 43C from Mus musculus (Mouse).